A 443-amino-acid chain; its full sequence is tRNA-2-methylthio-N(6)-dimethylallyladenosine synthase (443 aa).

The MTTase N-terminal domain maps to 1-114 (MRFYIKTFGC…VTEAVKRALQ (114 aa)). [4Fe-4S] cluster-binding residues include C10, C46, C79, C150, C154, and C157. In terms of domain architecture, Radical SAM core spans 136–367 (RSSKHHAWVT…MNLQKRINRK (232 aa)). The region spanning 370-431 (ERYKGKTVRV…AGPLYGKVVW (62 aa)) is the TRAM domain.

The protein belongs to the methylthiotransferase family. MiaB subfamily. Monomer. It depends on [4Fe-4S] cluster as a cofactor.

The protein resides in the cytoplasm. It carries out the reaction N(6)-dimethylallyladenosine(37) in tRNA + (sulfur carrier)-SH + AH2 + 2 S-adenosyl-L-methionine = 2-methylsulfanyl-N(6)-dimethylallyladenosine(37) in tRNA + (sulfur carrier)-H + 5'-deoxyadenosine + L-methionine + A + S-adenosyl-L-homocysteine + 2 H(+). Catalyzes the methylthiolation of N6-(dimethylallyl)adenosine (i(6)A), leading to the formation of 2-methylthio-N6-(dimethylallyl)adenosine (ms(2)i(6)A) at position 37 in tRNAs that read codons beginning with uridine. This is tRNA-2-methylthio-N(6)-dimethylallyladenosine synthase from Thermotoga sp. (strain RQ2).